We begin with the raw amino-acid sequence, 127 residues long: MTLDPYYETMYILRPDIPEEEVESHLTKYRDMLVEAGADVLDNQMRGKRRLAYPIDKHKEGIYVQLSHNGDGQQVAVLEKAMRLSEDVIRYLTVKQEGPLPAPRVVPGSEPAAAPQEQPAANSEAAS.

The tract at residues 99-127 is disordered; sequence PLPAPRVVPGSEPAAAPQEQPAANSEAAS. A compositionally biased stretch (low complexity) spans 109–127; the sequence is SEPAAAPQEQPAANSEAAS.

It belongs to the bacterial ribosomal protein bS6 family.

Binds together with bS18 to 16S ribosomal RNA. The protein is Small ribosomal subunit protein bS6 of Parasynechococcus marenigrum (strain WH8102).